The chain runs to 455 residues: UDP-N-acetylmuramoylalanine--D-glutamate ligase (455 aa).

119–125 (GTNGKTT) is an ATP binding site.

Belongs to the MurCDEF family.

It localises to the cytoplasm. It carries out the reaction UDP-N-acetyl-alpha-D-muramoyl-L-alanine + D-glutamate + ATP = UDP-N-acetyl-alpha-D-muramoyl-L-alanyl-D-glutamate + ADP + phosphate + H(+). It participates in cell wall biogenesis; peptidoglycan biosynthesis. Cell wall formation. Catalyzes the addition of glutamate to the nucleotide precursor UDP-N-acetylmuramoyl-L-alanine (UMA). The chain is UDP-N-acetylmuramoylalanine--D-glutamate ligase from Listeria monocytogenes serotype 4b (strain F2365).